The following is a 332-amino-acid chain: Long form salivary protein D7L1 (332 aa).

An N-terminal signal peptide occupies residues 1 to 21 (MHSPKSFLLLAVVFVALRVTA). Disulfide bonds link Cys-40–Cys-77 and Cys-73–Cys-133. Leukotriene E4 is bound at residue Trp-61. Position 176 (Lys-176) interacts with leukotriene E4. Cystine bridges form between Cys-184/Cys-219, Cys-200/Cys-331, and Cys-259/Cys-278. Noradrenaline contacts are provided by Glu-185 and Arg-203. Asp-294 and Glu-297 together coordinate noradrenaline.

This sequence belongs to the PBP/GOBP family. As to expression, female mosquito salivary gland (at protein level).

It localises to the secreted. Its function is as follows. Modulates blood feeding of female mosquitoes on vertebrate species by binding and sequestering different mediators involved in the host response, such as biogenic amines and eicosanoids. Binds dopamine, serotonin, histamine, tryptamine, adrenaline, noradrenaline, leukotriene B4, leukotriene C4, leukotriene D4, leukotriene E4 and U-46619, a stable analog of thromboxane A2. Inhibits platelet aggregation induced by serotonin and low doses of thromboxane A2 analog U-46619 but not by high doses of U-46619, collagen or ADP. Prevents leukocyte recruitment. In Aedes albopictus (Asian tiger mosquito), this protein is Long form salivary protein D7L1.